The chain runs to 680 residues: Coiled-coil domain-containing protein 138 (680 aa).

At Thr63 the chain carries Phosphothreonine. Ser64 is modified (phosphoserine). A coiled-coil region spans residues 260 to 339 (KEQHGTEIEH…YEFMTVQRLK (80 aa)). The segment at 390 to 410 (EPEEPGVDGGKPPAKPSQRSD) is disordered. Position 484 is a phosphoserine (Ser484).

The sequence is that of Coiled-coil domain-containing protein 138 (Ccdc138) from Mus musculus (Mouse).